The sequence spans 108 residues: Tubulin-specific chaperone A (108 aa).

Ala-2 is subject to N-acetylalanine.

This sequence belongs to the TBCA family. As to quaternary structure, supercomplex made of cofactors A to E. Cofactors A and D function by capturing and stabilizing tubulin in a quasi-native conformation. Cofactor E binds to the cofactor D-tubulin complex; interaction with cofactor C then causes the release of tubulin polypeptides that are committed to the native state.

Its subcellular location is the cytoplasm. It is found in the cytoskeleton. Functionally, tubulin-folding protein; involved in the early step of the tubulin folding pathway. This Rattus norvegicus (Rat) protein is Tubulin-specific chaperone A (Tbca).